Consider the following 629-residue polypeptide: tRNA uridine 5-carboxymethylaminomethyl modification enzyme MnmG (629 aa).

FAD-binding positions include 13 to 18, valine 125, and serine 180; that span reads GGGHAG. Residue 273–287 participates in NAD(+) binding; the sequence is GPRYCPSIEDKIHRF. FAD is bound at residue glutamine 370.

This sequence belongs to the MnmG family. In terms of assembly, homodimer. Heterotetramer of two MnmE and two MnmG subunits. FAD is required as a cofactor.

It localises to the cytoplasm. NAD-binding protein involved in the addition of a carboxymethylaminomethyl (cmnm) group at the wobble position (U34) of certain tRNAs, forming tRNA-cmnm(5)s(2)U34. The chain is tRNA uridine 5-carboxymethylaminomethyl modification enzyme MnmG from Shewanella oneidensis (strain ATCC 700550 / JCM 31522 / CIP 106686 / LMG 19005 / NCIMB 14063 / MR-1).